Here is a 132-residue protein sequence, read N- to C-terminus: ATP synthase epsilon chain (132 aa).

It belongs to the ATPase epsilon chain family. F-type ATPases have 2 components, CF(1) - the catalytic core - and CF(0) - the membrane proton channel. CF(1) has five subunits: alpha(3), beta(3), gamma(1), delta(1), epsilon(1). CF(0) has three main subunits: a, b and c.

The protein resides in the cell inner membrane. Produces ATP from ADP in the presence of a proton gradient across the membrane. The sequence is that of ATP synthase epsilon chain from Gloeobacter violaceus (strain ATCC 29082 / PCC 7421).